A 406-amino-acid polypeptide reads, in one-letter code: MTFSVERVRADFPVLNREVNGQPLAYLDSAASAQKPEAVIGAEAEFYRHGYAAVHRGIHTLSAEATARMEAVRQQAANFLNAGSAEEVVFVRGTTEGINLVANSWGNANVGAGDNIIISEMEHHANIVPWQMLCARVGAELRVIPLNPDGTLQLDVVPGLFDPRTRLLAITEVSNVLGTENPLAALIALAHQHGAKVLVDGAQAVMHHPVDVQALGCDFYVFSGHKLYGPTGIGVLYGRSELLQAMAPWEGGGSMIATVSLTEGTTWNRAPWRFEAGTPNTGGIIGLGAALTYVSQLGLTQIAEYEQTLMRYALEALRAVPDLILYGPAQRKGVIAFNLGQHHAYDVGSFLDNYGIAVRTGHHCAMPLMARYQVPAMCRASLAMYNTTEEVDRLVAGLQRIHKLLG.

An N6-(pyridoxal phosphate)lysine modification is found at lysine 226. The active-site Cysteine persulfide intermediate is the cysteine 364.

Belongs to the class-V pyridoxal-phosphate-dependent aminotransferase family. Csd subfamily. In terms of assembly, homodimer. Interacts with SufE and the SufBCD complex composed of SufB, SufC and SufD. The interaction with SufE is required to mediate the direct transfer of the sulfur atom from the S-sulfanylcysteine. The cofactor is pyridoxal 5'-phosphate.

Its subcellular location is the cytoplasm. It carries out the reaction (sulfur carrier)-H + L-cysteine = (sulfur carrier)-SH + L-alanine. It catalyses the reaction L-selenocysteine + AH2 = hydrogenselenide + L-alanine + A + H(+). It participates in cofactor biosynthesis; iron-sulfur cluster biosynthesis. Its function is as follows. Cysteine desulfurases mobilize the sulfur from L-cysteine to yield L-alanine, an essential step in sulfur metabolism for biosynthesis of a variety of sulfur-containing biomolecules. Component of the suf operon, which is activated and required under specific conditions such as oxidative stress and iron limitation. Acts as a potent selenocysteine lyase in vitro, that mobilizes selenium from L-selenocysteine. Selenocysteine lyase activity is however unsure in vivo. In Klebsiella pneumoniae (strain 342), this protein is Cysteine desulfurase.